The sequence spans 243 residues: Venom nerve growth factor 1 (243 aa).

The N-terminal stretch at 1–18 (MSMLCYTLIIAFLIGIWA) is a signal peptide. A propeptide spanning residues 19–125 (APKSEDNVPL…TLNRNIRAKR (107 aa)) is cleaved from the precursor. The span at 47 to 66 (GLKTSRNTDQRHPAPKKAED) shows a compositional bias: basic and acidic residues. A disordered region spans residues 47-69 (GLKTSRNTDQRHPAPKKAEDQEL). 3 cysteine pairs are disulfide-bonded: Cys-139–Cys-204, Cys-182–Cys-232, and Cys-192–Cys-234. The N-linked (GlcNAc...) asparagine glycan is linked to Asn-148.

The protein belongs to the NGF-beta family. In terms of assembly, homodimer; non-covalently linked. In terms of tissue distribution, expressed by the venom gland.

The protein localises to the secreted. Nerve growth factor is important for the development and maintenance of the sympathetic and sensory nervous systems. It stimulates division and differentiation of sympathetic and embryonic sensory neurons as well as basal forebrain cholinergic neurons in the brain. Its relevance in the snake venom is not clear. However, it has been shown to inhibit metalloproteinase-dependent proteolysis of platelet glycoprotein Ib alpha, suggesting a metalloproteinase inhibition to prevent metalloprotease autodigestion and/or protection against prey proteases. Binds a lipid between the two protein chains in the homodimer. The lipid-bound form promotes histamine relase from mouse mast cells, contrary to the lipid-free form. The protein is Venom nerve growth factor 1 of Oxyuranus microlepidotus (Inland taipan).